The chain runs to 388 residues: Chorismate synthase (388 aa).

Arginine 39 and arginine 45 together coordinate NADP(+). Residues 132–134, 251–252, glycine 296, 311–315, and arginine 337 contribute to the FMN site; these read RSS, NA, and KPIPT.

This sequence belongs to the chorismate synthase family. As to quaternary structure, homotetramer. FMNH2 is required as a cofactor.

It catalyses the reaction 5-O-(1-carboxyvinyl)-3-phosphoshikimate = chorismate + phosphate. The protein operates within metabolic intermediate biosynthesis; chorismate biosynthesis; chorismate from D-erythrose 4-phosphate and phosphoenolpyruvate: step 7/7. Functionally, catalyzes the anti-1,4-elimination of the C-3 phosphate and the C-6 proR hydrogen from 5-enolpyruvylshikimate-3-phosphate (EPSP) to yield chorismate, which is the branch point compound that serves as the starting substrate for the three terminal pathways of aromatic amino acid biosynthesis. This reaction introduces a second double bond into the aromatic ring system. This chain is Chorismate synthase, found in Staphylococcus epidermidis (strain ATCC 35984 / DSM 28319 / BCRC 17069 / CCUG 31568 / BM 3577 / RP62A).